The chain runs to 180 residues: uncharacterized protein (180 aa).

This is an uncharacterized protein from Aquifex aeolicus (strain VF5).